The primary structure comprises 325 residues: Pyruvate dehydrogenase E1 component subunit beta (325 aa).

Glutamate 60 is a thiamine diphosphate binding site.

As to quaternary structure, heterodimer of an alpha and a beta chain. It depends on thiamine diphosphate as a cofactor.

It catalyses the reaction N(6)-[(R)-lipoyl]-L-lysyl-[protein] + pyruvate + H(+) = N(6)-[(R)-S(8)-acetyldihydrolipoyl]-L-lysyl-[protein] + CO2. Functionally, the pyruvate dehydrogenase complex catalyzes the overall conversion of pyruvate to acetyl-CoA and CO(2). It contains multiple copies of three enzymatic components: pyruvate dehydrogenase (E1), dihydrolipoamide acetyltransferase (E2) and lipoamide dehydrogenase (E3). The polypeptide is Pyruvate dehydrogenase E1 component subunit beta (pdhB) (Staphylococcus aureus (strain Mu50 / ATCC 700699)).